Here is a 274-residue protein sequence, read N- to C-terminus: Large ribosomal subunit protein uL2cz/uL2cy (274 aa).

Disordered stretches follow at residues 1 to 22 (MAIH…DSQV) and 225 to 274 (PVDH…RRSK).

It belongs to the universal ribosomal protein uL2 family. As to quaternary structure, part of the 50S ribosomal subunit.

It is found in the plastid. It localises to the chloroplast. The polypeptide is Large ribosomal subunit protein uL2cz/uL2cy (rpl2-A) (Arabis hirsuta (Hairy rock-cress)).